We begin with the raw amino-acid sequence, 37 residues long: Large ribosomal subunit protein bL36c (37 aa).

The protein belongs to the bacterial ribosomal protein bL36 family.

It localises to the plastid. This chain is Large ribosomal subunit protein bL36c, found in Cuscuta reflexa (Southern Asian dodder).